We begin with the raw amino-acid sequence, 127 residues long: Large ribosomal subunit protein eL24 (127 aa).

The disordered stretch occupies residues 93-127 (KRAQKPEVKQAAAEQAKREIKEKKKAAAKKAAPKK). Over residues 115 to 127 (KKKAAAKKAAPKK) the composition is skewed to basic residues.

This sequence belongs to the eukaryotic ribosomal protein eL24 family.

The chain is Large ribosomal subunit protein eL24 (rpl24) from Dictyostelium discoideum (Social amoeba).